A 353-amino-acid chain; its full sequence is Quinolinate synthase (353 aa).

Residues His-47 and Ser-68 each coordinate iminosuccinate. Cys-113 contacts [4Fe-4S] cluster. Iminosuccinate contacts are provided by residues 139–141 (YAN) and Ser-156. [4Fe-4S] cluster is bound at residue Cys-200. Residues 226 to 228 (HPE) and Thr-243 each bind iminosuccinate. Residue Cys-297 coordinates [4Fe-4S] cluster.

Belongs to the quinolinate synthase family. Type 1 subfamily. It depends on [4Fe-4S] cluster as a cofactor.

It localises to the cytoplasm. The enzyme catalyses iminosuccinate + dihydroxyacetone phosphate = quinolinate + phosphate + 2 H2O + H(+). It participates in cofactor biosynthesis; NAD(+) biosynthesis; quinolinate from iminoaspartate: step 1/1. Its function is as follows. Catalyzes the condensation of iminoaspartate with dihydroxyacetone phosphate to form quinolinate. The protein is Quinolinate synthase of Yersinia pestis bv. Antiqua (strain Antiqua).